Here is a 491-residue protein sequence, read N- to C-terminus: MGWKEAAAPVLTRMPAVERPEGHVPFRRKMYWTGGVLVLYFFLTNVPLWGIQTAGNDFFGQFRSLLAGGQGTVLQLGIGPIVTASIVLQLLGGANLLGLDTDNDPRDQAIYQGLQKFLVGVMVVLTGAPMVFLGNFLQPSQQLAQSMPGGAFGVEVLIFAQIAAGGILLLFMDEVISKWGVGSGIGLFIVAGVSQSLVGGLVFWEGGVGSQGLLPTWFDIIVGNVSNMPPLLSGSGIEFLLMQAGILGLLTTLFIYVVVVYAESVRVEIPLSHARVKGARGRFPVKLIYASVLPMILVRALQANIQFLGQILNSTLASMPTWLGVYGGNGQVTGGLFYYLAPIYSPNAWMWWTSGATAARWQVLIRIAIDLSFMIIGGAIFAIFWVETADMGPDATARQIQNSGMQIPGFRKNQGVIEKVMERYIPQVTVIGGALVGLLAVMANMLGTIGNVSGTGLLLTISITYKLYEEIAEEQMMEMHPMMREMFGGGD.

The Cytoplasmic portion of the chain corresponds to 1–20 (MGWKEAAAPVLTRMPAVERP). The helical transmembrane segment at 21–47 (EGHVPFRRKMYWTGGVLVLYFFLTNVP) threads the bilayer. At 48–58 (LWGIQTAGNDF) the chain is on the extracellular side. The segment at residues 59–66 (FGQFRSLL) is an intramembrane region (helical). The discontinuously helical transmembrane segment at 59 to 87 (FGQFRSLLAGGQGTVLQLGIGPIVTASIV) threads the bilayer. Residues 67–78 (AGGQGTVLQLGI) lie within the membrane without spanning it. An intramembrane region (helical) is located at residues 79–87 (GPIVTASIV). The Cytoplasmic segment spans residues 88–109 (LQLLGGANLLGLDTDNDPRDQA). Residues 110-134 (IYQGLQKFLVGVMVVLTGAPMVFLG) traverse the membrane as a helical segment. The Extracellular portion of the chain corresponds to 135–152 (NFLQPSQQLAQSMPGGAF). A helical transmembrane segment spans residues 153–177 (GVEVLIFAQIAAGGILLLFMDEVIS). Residues 178–183 (KWGVGS) are Cytoplasmic-facing. A helical transmembrane segment spans residues 184-202 (GIGLFIVAGVSQSLVGGLV). The Extracellular segment spans residues 203-244 (FWEGGVGSQGLLPTWFDIIVGNVSNMPPLLSGSGIEFLLMQA). A helical transmembrane segment spans residues 245 to 266 (GILGLLTTLFIYVVVVYAESVR). The Cytoplasmic portion of the chain corresponds to 267 to 291 (VEIPLSHARVKGARGRFPVKLIYAS). Residues 292-313 (VLPMILVRALQANIQFLGQILN) traverse the membrane as a helical segment. Residues 314–365 (STLASMPTWLGVYGGNGQVTGGLFYYLAPIYSPNAWMWWTSGATAARWQVLI) are Extracellular-facing. Residues 366-385 (RIAIDLSFMIIGGAIFAIFW) traverse the membrane as a helical segment. Over 386 to 428 (VETADMGPDATARQIQNSGMQIPGFRKNQGVIEKVMERYIPQV) the chain is Cytoplasmic. The helical transmembrane segment at 429-447 (TVIGGALVGLLAVMANMLG) threads the bilayer. Residues 448–452 (TIGNV) are Extracellular-facing. Residues 453–467 (SGTGLLLTISITYKL) form a helical membrane-spanning segment. The Cytoplasmic segment spans residues 468-491 (YEEIAEEQMMEMHPMMREMFGGGD).

This sequence belongs to the SecY/SEC61-alpha family. Component of the Sec protein translocase complex. Heterotrimer consisting of alpha (SecY), beta (SecG) and gamma (SecE) subunits. The heterotrimers can form oligomers, although 1 heterotrimer is thought to be able to translocate proteins. Interacts with the ribosome. May interact with SecDF, and other proteins may be involved.

It is found in the cell membrane. Its function is as follows. The central subunit of the protein translocation channel SecYEG. Consists of two halves formed by TMs 1-5 and 6-10. These two domains form a lateral gate at the front which open onto the bilayer between TMs 2 and 7, and are clamped together by SecE at the back. The channel is closed by both a pore ring composed of hydrophobic SecY resides and a short helix (helix 2A) on the extracellular side of the membrane which forms a plug. The plug probably moves laterally to allow the channel to open. The ring and the pore may move independently. The chain is Protein translocase subunit SecY from Halobacterium salinarum (strain ATCC 700922 / JCM 11081 / NRC-1) (Halobacterium halobium).